The chain runs to 105 residues: Pyrimidine/purine nucleoside phosphorylase (105 aa).

Belongs to the nucleoside phosphorylase PpnP family.

It carries out the reaction a purine D-ribonucleoside + phosphate = a purine nucleobase + alpha-D-ribose 1-phosphate. It catalyses the reaction adenosine + phosphate = alpha-D-ribose 1-phosphate + adenine. The enzyme catalyses cytidine + phosphate = cytosine + alpha-D-ribose 1-phosphate. The catalysed reaction is guanosine + phosphate = alpha-D-ribose 1-phosphate + guanine. It carries out the reaction inosine + phosphate = alpha-D-ribose 1-phosphate + hypoxanthine. It catalyses the reaction thymidine + phosphate = 2-deoxy-alpha-D-ribose 1-phosphate + thymine. The enzyme catalyses uridine + phosphate = alpha-D-ribose 1-phosphate + uracil. The catalysed reaction is xanthosine + phosphate = alpha-D-ribose 1-phosphate + xanthine. Functionally, catalyzes the phosphorolysis of diverse nucleosides, yielding D-ribose 1-phosphate and the respective free bases. Can use uridine, adenosine, guanosine, cytidine, thymidine, inosine and xanthosine as substrates. Also catalyzes the reverse reactions. In Ralstonia nicotianae (strain ATCC BAA-1114 / GMI1000) (Ralstonia solanacearum), this protein is Pyrimidine/purine nucleoside phosphorylase.